The following is a 174-amino-acid chain: uncharacterized protein (174 aa).

This is an uncharacterized protein from Bacillus subtilis (strain 168).